The chain runs to 202 residues: Glycerol-3-phosphate acyltransferase (202 aa).

The next 5 membrane-spanning stretches (helical) occupy residues Leu-11–Ile-31, Ala-60–Ala-80, Ala-88–Phe-108, Phe-117–Leu-137, and Leu-162–Trp-182.

It belongs to the PlsY family. As to quaternary structure, probably interacts with PlsX.

It is found in the cell inner membrane. It carries out the reaction an acyl phosphate + sn-glycerol 3-phosphate = a 1-acyl-sn-glycero-3-phosphate + phosphate. The protein operates within lipid metabolism; phospholipid metabolism. Catalyzes the transfer of an acyl group from acyl-phosphate (acyl-PO(4)) to glycerol-3-phosphate (G3P) to form lysophosphatidic acid (LPA). This enzyme utilizes acyl-phosphate as fatty acyl donor, but not acyl-CoA or acyl-ACP. The protein is Glycerol-3-phosphate acyltransferase of Ruegeria sp. (strain TM1040) (Silicibacter sp.).